The sequence spans 389 residues: GDSL esterase/lipase At1g28570 (389 aa).

An N-terminal signal peptide occupies residues 1–25 (MATLFMKLVSFFLILSTFCLTTVNS). S41 serves as the catalytic Nucleophile. N-linked (GlcNAc...) asparagine glycosylation is found at N137 and N319. Active-site residues include D344 and H347.

This sequence belongs to the 'GDSL' lipolytic enzyme family.

It localises to the secreted. The sequence is that of GDSL esterase/lipase At1g28570 from Arabidopsis thaliana (Mouse-ear cress).